The sequence spans 217 residues: Pyrophosphatase PpaX (217 aa).

Asp-11 serves as the catalytic Nucleophile.

Belongs to the HAD-like hydrolase superfamily. PpaX family. Mg(2+) serves as cofactor.

It catalyses the reaction diphosphate + H2O = 2 phosphate + H(+). Functionally, hydrolyzes pyrophosphate formed during P-Ser-HPr dephosphorylation by HPrK/P. Might play a role in controlling the intracellular pyrophosphate pool. This chain is Pyrophosphatase PpaX, found in Listeria welshimeri serovar 6b (strain ATCC 35897 / DSM 20650 / CCUG 15529 / CIP 8149 / NCTC 11857 / SLCC 5334 / V8).